The primary structure comprises 299 residues: CCR4-NOT transcription complex subunit 9 (299 aa).

Belongs to the CNOT9 family. As to quaternary structure, homodimer. Component of the CCR4-NOT complex.

The protein localises to the nucleus. The protein resides in the cytoplasm. It is found in the P-body. Component of the CCR4-NOT complex which is one of the major cellular mRNA deadenylases and is linked to various cellular processes including bulk mRNA degradation, miRNA-mediated repression, translational repression during translational initiation and general transcription regulation. Additional complex functions may be a consequence of its influence on mRNA expression. Involved in down-regulation of MYB- and JUN-dependent transcription. Enhances ligand-dependent transcriptional activity of nuclear hormone receptors. May play a role in cell differentiation. In Xenopus tropicalis (Western clawed frog), this protein is CCR4-NOT transcription complex subunit 9.